Reading from the N-terminus, the 31-residue chain is Cytochrome b6-f complex subunit 6 (31 aa).

Residues 3-23 form a helical membrane-spanning segment; sequence VAIDYFLLVGFCFAVTSGLWI.

The protein belongs to the PetL family. In terms of assembly, the 4 large subunits of the cytochrome b6-f complex are cytochrome b6, subunit IV (17 kDa polypeptide, PetD), cytochrome f and the Rieske protein, while the 4 small subunits are PetG, PetL, PetM and PetN. The complex functions as a dimer.

Its subcellular location is the plastid. The protein resides in the chloroplast thylakoid membrane. Functionally, component of the cytochrome b6-f complex, which mediates electron transfer between photosystem II (PSII) and photosystem I (PSI), cyclic electron flow around PSI, and state transitions. PetL is important for photoautotrophic growth as well as for electron transfer efficiency and stability of the cytochrome b6-f complex. This is Cytochrome b6-f complex subunit 6 from Phaeodactylum tricornutum (strain CCAP 1055/1).